The sequence spans 165 residues: Nucleotide-binding protein PMN2A_1813 (165 aa).

Belongs to the YajQ family.

Nucleotide-binding protein. The polypeptide is Nucleotide-binding protein PMN2A_1813 (Prochlorococcus marinus (strain NATL2A)).